A 440-amino-acid polypeptide reads, in one-letter code: 23S rRNA (uracil(1939)-C(5))-methyltransferase RlmD (440 aa).

The TRAM domain occupies 8–69 (PQKINKLQRE…RQFGLATTKK (62 aa)). Cys-82, Cys-88, Cys-91, and Cys-169 together coordinate [4Fe-4S] cluster. Residues Gln-272, Phe-301, Asn-306, Glu-322, Asp-349, and Asp-370 each contribute to the S-adenosyl-L-methionine site. The Nucleophile role is filled by Cys-396.

The protein belongs to the class I-like SAM-binding methyltransferase superfamily. RNA M5U methyltransferase family. RlmD subfamily.

It catalyses the reaction uridine(1939) in 23S rRNA + S-adenosyl-L-methionine = 5-methyluridine(1939) in 23S rRNA + S-adenosyl-L-homocysteine + H(+). Its function is as follows. Catalyzes the formation of 5-methyl-uridine at position 1939 (m5U1939) in 23S rRNA. The protein is 23S rRNA (uracil(1939)-C(5))-methyltransferase RlmD of Mannheimia succiniciproducens (strain KCTC 0769BP / MBEL55E).